Here is a 117-residue protein sequence, read N- to C-terminus: Large ribosomal subunit protein bL20 (117 aa).

The protein belongs to the bacterial ribosomal protein bL20 family.

Binds directly to 23S ribosomal RNA and is necessary for the in vitro assembly process of the 50S ribosomal subunit. It is not involved in the protein synthesizing functions of that subunit. The chain is Large ribosomal subunit protein bL20 from Streptococcus suis (strain 05ZYH33).